Here is a 507-residue protein sequence, read N- to C-terminus: ATP synthase subunit alpha, chloroplastic (507 aa).

170-177 (GDRQTGKT) is a binding site for ATP.

This sequence belongs to the ATPase alpha/beta chains family. As to quaternary structure, F-type ATPases have 2 components, CF(1) - the catalytic core - and CF(0) - the membrane proton channel. CF(1) has five subunits: alpha(3), beta(3), gamma(1), delta(1), epsilon(1). CF(0) has four main subunits: a, b, b' and c.

It localises to the plastid. The protein resides in the chloroplast thylakoid membrane. The catalysed reaction is ATP + H2O + 4 H(+)(in) = ADP + phosphate + 5 H(+)(out). Functionally, produces ATP from ADP in the presence of a proton gradient across the membrane. The alpha chain is a regulatory subunit. The chain is ATP synthase subunit alpha, chloroplastic from Nicotiana sylvestris (Wood tobacco).